The chain runs to 491 residues: Cobyric acid synthase (491 aa).

A GATase cobBQ-type domain is found at 253–429 (AHRVAVVRLP…WHGSLEGDAL (177 aa)). The Nucleophile role is filled by Cys-334. His-421 is a catalytic residue.

Belongs to the CobB/CobQ family. CobQ subfamily.

It participates in cofactor biosynthesis; adenosylcobalamin biosynthesis. In terms of biological role, catalyzes amidations at positions B, D, E, and G on adenosylcobyrinic A,C-diamide. NH(2) groups are provided by glutamine, and one molecule of ATP is hydrogenolyzed for each amidation. This is Cobyric acid synthase from Mycobacterium marinum (strain ATCC BAA-535 / M).